The sequence spans 293 residues: Pyridoxal 5'-phosphate synthase subunit PdxS (293 aa).

Aspartate 23 contacts D-ribose 5-phosphate. The Schiff-base intermediate with D-ribose 5-phosphate role is filled by lysine 80. Glycine 152 serves as a coordination point for D-ribose 5-phosphate. Arginine 164 is a D-glyceraldehyde 3-phosphate binding site. D-ribose 5-phosphate is bound by residues glycine 213 and 234–235; that span reads GS.

This sequence belongs to the PdxS/SNZ family. As to quaternary structure, in the presence of PdxT, forms a dodecamer of heterodimers.

The enzyme catalyses aldehydo-D-ribose 5-phosphate + D-glyceraldehyde 3-phosphate + L-glutamine = pyridoxal 5'-phosphate + L-glutamate + phosphate + 3 H2O + H(+). The protein operates within cofactor biosynthesis; pyridoxal 5'-phosphate biosynthesis. Catalyzes the formation of pyridoxal 5'-phosphate from ribose 5-phosphate (RBP), glyceraldehyde 3-phosphate (G3P) and ammonia. The ammonia is provided by the PdxT subunit. Can also use ribulose 5-phosphate and dihydroxyacetone phosphate as substrates, resulting from enzyme-catalyzed isomerization of RBP and G3P, respectively. The polypeptide is Pyridoxal 5'-phosphate synthase subunit PdxS (Niallia circulans (Bacillus circulans)).